Reading from the N-terminus, the 186-residue chain is Two-component response regulator ARR6 (186 aa).

In terms of domain architecture, Response regulatory spans 26-153 (HVLAVDDSHV…DVKRLRDSLM (128 aa)). D86 carries the 4-aspartylphosphate modification.

This sequence belongs to the ARR family. Type-A subfamily. In terms of processing, two-component system major event consists of a His-to-Asp phosphorelay between a sensor histidine kinase (HK) and a response regulator (RR). In plants, the His-to-Asp phosphorelay involves an additional intermediate named Histidine-containing phosphotransfer protein (HPt). This multistep phosphorelay consists of a His-Asp-His-Asp sequential transfer of a phosphate group between first a His and an Asp of the HK protein, followed by the transfer to a conserved His of the HPt protein and finally the transfer to an Asp in the receiver domain of the RR protein. Predominantly expressed in roots.

It localises to the nucleus. Functions as a response regulator involved in His-to-Asp phosphorelay signal transduction system. Phosphorylation of the Asp residue in the receiver domain activates the ability of the protein to promote the transcription of target genes. Type-A response regulators seem to act as negative regulators of the cytokinin signaling. This Arabidopsis thaliana (Mouse-ear cress) protein is Two-component response regulator ARR6 (ARR6).